A 141-amino-acid chain; its full sequence is Large ribosomal subunit protein uL11 (141 aa).

It belongs to the universal ribosomal protein uL11 family. In terms of assembly, part of the ribosomal stalk of the 50S ribosomal subunit. Interacts with L10 and the large rRNA to form the base of the stalk. L10 forms an elongated spine to which L12 dimers bind in a sequential fashion forming a multimeric L10(L12)X complex. One or more lysine residues are methylated.

In terms of biological role, forms part of the ribosomal stalk which helps the ribosome interact with GTP-bound translation factors. This Synechococcus sp. (strain JA-2-3B'a(2-13)) (Cyanobacteria bacterium Yellowstone B-Prime) protein is Large ribosomal subunit protein uL11.